The primary structure comprises 880 residues: Lon protease (880 aa).

Positions 1-37 are disordered; that stretch reads MADYNDKNYLLHMSGPDSDTGPGIENEDPRAVENPGH. Positions 27–37 are enriched in basic and acidic residues; it reads EDPRAVENPGH. The 195-residue stretch at 57–251 folds into the Lon N-terminal domain; that stretch reads LPILPVRDVV…LVNTQLQREV (195 aa). ATP is bound at residue 404-411; sequence GPPGVGKT. Residues 640–821 enclose the Lon proteolytic domain; that stretch reads KLMPGMALGL…DELLPLVFEG (182 aa). Catalysis depends on residues serine 727 and lysine 770. Gly residues predominate over residues 826-836; that stretch reads GGVSGAGQAGD. A disordered region spans residues 826–880; the sequence is GGVSGAGQAGDKGGKSKAAAGKKDVVAARPAKPAAPARRRKDKTEDELPTAEAGA. Low complexity predominate over residues 852 to 861; it reads AARPAKPAAP.

Belongs to the peptidase S16 family. Homohexamer. Organized in a ring with a central cavity.

Its subcellular location is the cytoplasm. The catalysed reaction is Hydrolysis of proteins in presence of ATP.. In terms of biological role, ATP-dependent serine protease that mediates the selective degradation of mutant and abnormal proteins as well as certain short-lived regulatory proteins. Required for cellular homeostasis and for survival from DNA damage and developmental changes induced by stress. Degrades polypeptides processively to yield small peptide fragments that are 5 to 10 amino acids long. Binds to DNA in a double-stranded, site-specific manner. The chain is Lon protease from Desulfovibrio desulfuricans (strain ATCC 27774 / DSM 6949 / MB).